The sequence spans 261 residues: Cytochrome c oxidase subunit 3 (261 aa).

At 1 to 15 (MTHQTHAYHMVNPSP) the chain is on the mitochondrial matrix side. A helical membrane pass occupies residues 16-34 (WPLTGALSALLMTSGLIMW). Residues 35-40 (FHFNST) lie on the Mitochondrial intermembrane side of the membrane. The helical transmembrane segment at 41-66 (TLLMLGLTTNMLTMYQWWRDVVREST) threads the bilayer. The Mitochondrial matrix portion of the chain corresponds to 67-72 (FQGHHT). The chain crosses the membrane as a helical span at residues 73 to 105 (PNVQKGLRYGMILFIISEVLFFTGFFWAFYHSS). The Mitochondrial intermembrane portion of the chain corresponds to 106-128 (LAPTPELGGCWPPTGIHPLNPLE). A helical transmembrane segment spans residues 129-152 (VPLLNTSVLLASGVSITWAHHSLM). Residues 153–155 (EGN) lie on the Mitochondrial matrix side of the membrane. A helical transmembrane segment spans residues 156–183 (RNHMLQALFITIALGVYFTLLQASEYYE). At 184–190 (APFTISD) the chain is on the mitochondrial intermembrane side. The helical transmembrane segment at 191–223 (GVYGSTFFVATGFHGLHVIIGSTFLIVCFFRQL) threads the bilayer. Residues 224-232 (KFHFTSNHH) are Mitochondrial matrix-facing. A helical membrane pass occupies residues 233–256 (FGFEAAAWYWHFVDVVWLFLYVSI). The Mitochondrial intermembrane portion of the chain corresponds to 257-261 (YWWGS).

Belongs to the cytochrome c oxidase subunit 3 family. In terms of assembly, component of the cytochrome c oxidase (complex IV, CIV), a multisubunit enzyme composed of 14 subunits. The complex is composed of a catalytic core of 3 subunits MT-CO1, MT-CO2 and MT-CO3, encoded in the mitochondrial DNA, and 11 supernumerary subunits COX4I, COX5A, COX5B, COX6A, COX6B, COX6C, COX7A, COX7B, COX7C, COX8 and NDUFA4, which are encoded in the nuclear genome. The complex exists as a monomer or a dimer and forms supercomplexes (SCs) in the inner mitochondrial membrane with NADH-ubiquinone oxidoreductase (complex I, CI) and ubiquinol-cytochrome c oxidoreductase (cytochrome b-c1 complex, complex III, CIII), resulting in different assemblies (supercomplex SCI(1)III(2)IV(1) and megacomplex MCI(2)III(2)IV(2)).

It localises to the mitochondrion inner membrane. The enzyme catalyses 4 Fe(II)-[cytochrome c] + O2 + 8 H(+)(in) = 4 Fe(III)-[cytochrome c] + 2 H2O + 4 H(+)(out). Component of the cytochrome c oxidase, the last enzyme in the mitochondrial electron transport chain which drives oxidative phosphorylation. The respiratory chain contains 3 multisubunit complexes succinate dehydrogenase (complex II, CII), ubiquinol-cytochrome c oxidoreductase (cytochrome b-c1 complex, complex III, CIII) and cytochrome c oxidase (complex IV, CIV), that cooperate to transfer electrons derived from NADH and succinate to molecular oxygen, creating an electrochemical gradient over the inner membrane that drives transmembrane transport and the ATP synthase. Cytochrome c oxidase is the component of the respiratory chain that catalyzes the reduction of oxygen to water. Electrons originating from reduced cytochrome c in the intermembrane space (IMS) are transferred via the dinuclear copper A center (CU(A)) of subunit 2 and heme A of subunit 1 to the active site in subunit 1, a binuclear center (BNC) formed by heme A3 and copper B (CU(B)). The BNC reduces molecular oxygen to 2 water molecules using 4 electrons from cytochrome c in the IMS and 4 protons from the mitochondrial matrix. In Gazella cuvieri (Cuvier's gazelle), this protein is Cytochrome c oxidase subunit 3 (MT-CO3).